Here is a 312-residue protein sequence, read N- to C-terminus: DNA-directed RNA polymerase subunit alpha (312 aa).

The segment at 1–229 (MLQYQIDRIE…ELFQPLATVT (229 aa)) is alpha N-terminal domain (alpha-NTD). The interval 239–312 (EPSAEAQIPL…ISIPQSRTSA (74 aa)) is alpha C-terminal domain (alpha-CTD).

The protein belongs to the RNA polymerase alpha chain family. In terms of assembly, in cyanobacteria the RNAP catalytic core is composed of 2 alpha, 1 beta, 1 beta', 1 gamma and 1 omega subunit. When a sigma factor is associated with the core the holoenzyme is formed, which can initiate transcription.

It carries out the reaction RNA(n) + a ribonucleoside 5'-triphosphate = RNA(n+1) + diphosphate. DNA-dependent RNA polymerase catalyzes the transcription of DNA into RNA using the four ribonucleoside triphosphates as substrates. This Synechococcus sp. (strain CC9605) protein is DNA-directed RNA polymerase subunit alpha.